Reading from the N-terminus, the 574-residue chain is Hyaluronan synthase 3 (574 aa).

Over 1 to 15 (MPVSLSTALRVVGTS) the chain is Cytoplasmic. Residues 16–36 (LFALAVLGGILAAYVTGYQFI) form a helical membrane-spanning segment. The Extracellular portion of the chain corresponds to 37 to 44 (HTEKHYLS). A helical transmembrane segment spans residues 45–65 (FGLYGAILGLHLFIQSLFAFL). Topologically, residues 66 to 398 (EHRRMRAERQ…NALWFHKHHL (333 aa)) are cytoplasmic. The helical transmembrane segment at 399 to 419 (WMTYESVVTGFFPFFLIATVI) threads the bilayer. At 420–429 (QLFYRGRIWN) the chain is on the extracellular side. Residues 430-450 (ILLFLLTVQLVGIIKATYACF) form a helical membrane-spanning segment. Topologically, residues 451-456 (LRGSAE) are cytoplasmic. Residues 457 to 477 (MIFVSLYALLYMSSLLPAKMF) form a helical membrane-spanning segment. Over 478–494 (AIATINKSGWGTSGRRT) the chain is Extracellular. The helical transmembrane segment at 495 to 515 (IVVNFVGLLPVSVWAAVLLGG) threads the bilayer. The Cytoplasmic segment spans residues 516–530 (LAYTAYSQDLLSDTE). Residues 531 to 551 (VAFLISGAVLYACYWVALLTL) form a helical membrane-spanning segment. Over 552–574 (YLAMVARRCGKRKEQCGLVFAEV) the chain is Extracellular.

Belongs to the NodC/HAS family. Mg(2+) serves as cofactor. In terms of processing, O-GlcNAcylation increases the hyaluronan synthase activity, HAS3 stability and its plasma membrane residence. The concentration of UDP-GlcNAc controls the level of O-GlcNAc modification.

It localises to the cell membrane. The protein resides in the golgi apparatus membrane. Its subcellular location is the golgi apparatus. It is found in the trans-Golgi network membrane. The protein localises to the cytoplasmic vesicle. It carries out the reaction [hyaluronan](n) + UDP-N-acetyl-alpha-D-glucosamine = N-acetyl-beta-D-glucosaminyl-(1-&gt;4)-[hyaluronan](n) + UDP + H(+). It catalyses the reaction N-acetyl-beta-D-glucosaminyl-(1-&gt;4)-[hyaluronan](n) + UDP-alpha-D-glucuronate = [hyaluronan](n+1) + UDP + H(+). The protein operates within glycan biosynthesis; hyaluronan biosynthesis. Catalyzes the addition of GlcNAc or GlcUA monosaccharides to the nascent hyaluronan polymer. Therefore, it is essential to hyaluronan synthesis a major component of most extracellular matrices that has a structural role in tissues architectures and regulates cell adhesion, migration and differentiation. This is one of three isoenzymes responsible for cellular hyaluronan synthesis. The sequence is that of Hyaluronan synthase 3 (HAS3) from Gallus gallus (Chicken).